The sequence spans 333 residues: Type II secretion system protein K (333 aa).

Positions 1 to 7 (MRRGQNG) are cleaved as a propeptide — leader sequence. A helical transmembrane segment spans residues 8–29 (VALITVLLVVAVVTIVCAGLII). Residues 30–333 (RQQLAIRSSA…GGDDWKKDER (304 aa)) are Periplasmic-facing. The segment at 313–333 (MGQGGLPIPSTGGDDWKKDER) is disordered.

It belongs to the GSP K family. Type II secretion is composed of four main components: the outer membrane complex, the inner membrane complex, the cytoplasmic secretion ATPase and the periplasm-spanning pseudopilus. Interacts with the tip of the type II pseudopilus subunits XcpV, XcpU and XcpW. Interacts with core component XcpT. In terms of processing, cleaved by prepilin peptidase.

The protein localises to the cell inner membrane. In terms of biological role, component of the type II secretion system required for the energy-dependent secretion of extracellular factors such as proteases and toxins from the periplasm. Plays a role in pseudopilus assembly and seems to control its length. Interacts with the pseudopilus tip complex that is critical for the recognition and binding of secretion substrates. Type II pseudopilus confers increased bacterial adhesive capabilities. The polypeptide is Type II secretion system protein K (xcpX) (Pseudomonas aeruginosa (strain ATCC 15692 / DSM 22644 / CIP 104116 / JCM 14847 / LMG 12228 / 1C / PRS 101 / PAO1)).